Here is a 123-residue protein sequence, read N- to C-terminus: Insulin-like peptide-1 (123 aa).

Residues 1–24 (MTTSSYFLLVALGLLLYVCQSSFG) form the signal peptide. Intrachain disulfides connect Cys29–Cys106, Cys41–Cys109, Cys53–Cys122, and Cys108–Cys113. Pro34 is subject to 4-hydroxyproline; partial. A propeptide spans 59–102 (EQGGANNARAYTGRTSSLMKRRGFLSLLKKRGKRDEGSLQRSGR) (c peptide). Position 107 is a 4-carboxyglutamate (Glu107). Glu117 bears the 4-carboxyglutamate; partial mark.

Belongs to the insulin family. Heterodimer of A and B chains; disulfide-linked. As to expression, expressed by the venom duct.

It is found in the secreted. Its function is as follows. This venom insulin facilitates prey capture by rapidly inducing hypoglycemic shock. Intraperitoneal injection of this peptide into zebrafish lowers blood glucose with the same potency than human insulin. In vivo, when applied to water, this peptide reduces overall locomotor activity of zebrafish larvae, observed as a significant decrease in the percentage of time spent swimming and movement frequency. This is Insulin-like peptide-1 from Conus victoriae (Queen Victoria cone).